Consider the following 515-residue polypeptide: GMP synthase [glutamine-hydrolyzing] (515 aa).

The Glutamine amidotransferase type-1 domain maps to T10–G200. Catalysis depends on C87, which acts as the Nucleophile. Residues H174 and E176 contribute to the active site. The 190-residue stretch at W201–R390 folds into the GMPS ATP-PPase domain. ATP is bound at residue S228–S234.

As to quaternary structure, homodimer.

The catalysed reaction is XMP + L-glutamine + ATP + H2O = GMP + L-glutamate + AMP + diphosphate + 2 H(+). It participates in purine metabolism; GMP biosynthesis; GMP from XMP (L-Gln route): step 1/1. In terms of biological role, catalyzes the synthesis of GMP from XMP. This chain is GMP synthase [glutamine-hydrolyzing], found in Bacillus thuringiensis subsp. konkukian (strain 97-27).